We begin with the raw amino-acid sequence, 444 residues long: Ribosomal protein uS12 methylthiotransferase RimO (444 aa).

Positions 4–118 (YKIGLISLGC…IQNYIDDFFN (115 aa)) constitute an MTTase N-terminal domain. The [4Fe-4S] cluster site is built by Cys13, Cys48, Cys81, Cys155, Cys159, and Cys162. Positions 141–371 (TTAKHMAYIR…MSIQQNVSSK (231 aa)) constitute a Radical SAM core domain. The region spanning 374 to 440 (KNKLEKVYKV…EYDLIGVVCD (67 aa)) is the TRAM domain.

The protein belongs to the methylthiotransferase family. RimO subfamily. The cofactor is [4Fe-4S] cluster.

It localises to the cytoplasm. The enzyme catalyses L-aspartate(89)-[ribosomal protein uS12]-hydrogen + (sulfur carrier)-SH + AH2 + 2 S-adenosyl-L-methionine = 3-methylsulfanyl-L-aspartate(89)-[ribosomal protein uS12]-hydrogen + (sulfur carrier)-H + 5'-deoxyadenosine + L-methionine + A + S-adenosyl-L-homocysteine + 2 H(+). Catalyzes the methylthiolation of an aspartic acid residue of ribosomal protein uS12. The polypeptide is Ribosomal protein uS12 methylthiotransferase RimO (Clostridium novyi (strain NT)).